The following is a 353-amino-acid chain: Quinolinate synthase (353 aa).

His47 and Ser68 together coordinate iminosuccinate. Cys113 contributes to the [4Fe-4S] cluster binding site. Iminosuccinate is bound by residues 139 to 141 (YAN) and Ser156. Residue Cys200 participates in [4Fe-4S] cluster binding. Iminosuccinate contacts are provided by residues 226–228 (HPE) and Thr243. Cys297 is a [4Fe-4S] cluster binding site.

It belongs to the quinolinate synthase family. Type 1 subfamily. [4Fe-4S] cluster is required as a cofactor.

It is found in the cytoplasm. It carries out the reaction iminosuccinate + dihydroxyacetone phosphate = quinolinate + phosphate + 2 H2O + H(+). It participates in cofactor biosynthesis; NAD(+) biosynthesis; quinolinate from iminoaspartate: step 1/1. Its function is as follows. Catalyzes the condensation of iminoaspartate with dihydroxyacetone phosphate to form quinolinate. The chain is Quinolinate synthase from Pectobacterium carotovorum subsp. carotovorum (strain PC1).